Consider the following 136-residue polypeptide: Protein scalloped (136 aa).

It is found in the nucleus. Its function is as follows. Probable transcription factor that function in the regulation of cell-specific gene expression during drosophila development, particularly in the differentiation of the nervous system. This is Protein scalloped (SD) from Junonia coenia (Peacock butterfly).